The following is a 232-amino-acid chain: RNA chaperone ProQ (232 aa).

Residues 105–182 are disordered; the sequence is EAKARVQAQR…REEQHTPVSD (78 aa). Over residues 117-136 the composition is skewed to basic and acidic residues; that stretch reads QQAKKREAAAAAGEKEDAPR. A compositionally biased stretch (basic residues) spans 137–146; sequence RERKPRPTTP. Residues 147–177 are compositionally biased toward basic and acidic residues; it reads RRKEGAERKPRAQKPVEKAPKTVKAPREEQH.

It belongs to the ProQ family.

It localises to the cytoplasm. Functionally, RNA chaperone with significant RNA binding, RNA strand exchange and RNA duplexing activities. May regulate ProP activity through an RNA-based, post-transcriptional mechanism. This chain is RNA chaperone ProQ, found in Shigella boydii serotype 18 (strain CDC 3083-94 / BS512).